A 590-amino-acid chain; its full sequence is Aspartate--tRNA(Asp/Asn) ligase (590 aa).

Residue Glu-175 coordinates L-aspartate. The aspartate stretch occupies residues 199-202; the sequence is QQYK. Residues Arg-221 and His-450 each coordinate L-aspartate. 221–223 lines the ATP pocket; that stretch reads RDE. Glu-484 lines the ATP pocket. Position 491 (Arg-491) interacts with L-aspartate. 536-539 lines the ATP pocket; it reads GVDR.

Belongs to the class-II aminoacyl-tRNA synthetase family. Type 1 subfamily. In terms of assembly, homodimer.

It localises to the cytoplasm. It catalyses the reaction tRNA(Asx) + L-aspartate + ATP = L-aspartyl-tRNA(Asx) + AMP + diphosphate. Its function is as follows. Aspartyl-tRNA synthetase with relaxed tRNA specificity since it is able to aspartylate not only its cognate tRNA(Asp) but also tRNA(Asn). Reaction proceeds in two steps: L-aspartate is first activated by ATP to form Asp-AMP and then transferred to the acceptor end of tRNA(Asp/Asn). The sequence is that of Aspartate--tRNA(Asp/Asn) ligase from Rhodopseudomonas palustris (strain BisB18).